Here is a 240-residue protein sequence, read N- to C-terminus: Sugar fermentation stimulation protein homolog (240 aa).

Belongs to the SfsA family.

The polypeptide is Sugar fermentation stimulation protein homolog (Saccharolobus solfataricus (strain ATCC 35092 / DSM 1617 / JCM 11322 / P2) (Sulfolobus solfataricus)).